A 102-amino-acid polypeptide reads, in one-letter code: Salivary thrombin inhibitor anophelin (102 aa).

Positions 1–21 are cleaved as a signal peptide; that stretch reads MATKLIVIAFLCAALIAVVQS. The disordered stretch occupies residues 25–102; sequence YAQGEEPTYD…SDSSSESTEH (78 aa). Residues 59–69 are compositionally biased toward polar residues; sequence SQLTEYANTAQ. Residues 70–73 form a blocks active site cleft of host thrombin in a reverse direction compared to substrates region; sequence DPGR. A compositionally biased stretch (polar residues) spans 80–90; the sequence is QANSNNGDQLP. Residues 91 to 102 are compositionally biased toward low complexity; sequence SQSDSSSESTEH.

This sequence belongs to the anophelin family. In terms of assembly, interacts with human F2 (thrombin); the interaction results in thrombin inhibition.

It is found in the secreted. Its function is as follows. Salivary protein with anticoagulant activity that inhibits host thrombin (F2). This is Salivary thrombin inhibitor anophelin from Anopheles funestus (African malaria mosquito).